The primary structure comprises 68 residues: MQVSVRDNNVDQALRALKKKLQREGVFREMKLKQHFEKPSEKKAREKAEAIRRARKLARKKAQREGLL.

The protein belongs to the bacterial ribosomal protein bS21 family.

This is Small ribosomal subunit protein bS21 from Ruegeria sp. (strain TM1040) (Silicibacter sp.).